The chain runs to 182 residues: Large ribosomal subunit protein uL5 (182 aa).

It belongs to the universal ribosomal protein uL5 family. Part of the 50S ribosomal subunit; part of the 5S rRNA/L5/L18/L25 subcomplex. Contacts the 5S rRNA and the P site tRNA. Forms a bridge to the 30S subunit in the 70S ribosome.

In terms of biological role, this is one of the proteins that bind and probably mediate the attachment of the 5S RNA into the large ribosomal subunit, where it forms part of the central protuberance. In the 70S ribosome it contacts protein S13 of the 30S subunit (bridge B1b), connecting the 2 subunits; this bridge is implicated in subunit movement. Contacts the P site tRNA; the 5S rRNA and some of its associated proteins might help stabilize positioning of ribosome-bound tRNAs. The sequence is that of Large ribosomal subunit protein uL5 from Acidobacterium capsulatum (strain ATCC 51196 / DSM 11244 / BCRC 80197 / JCM 7670 / NBRC 15755 / NCIMB 13165 / 161).